A 92-amino-acid chain; its full sequence is Large ribosomal subunit protein bL28 (92 aa).

Belongs to the bacterial ribosomal protein bL28 family.

In Borreliella afzelii (strain PKo) (Borrelia afzelii), this protein is Large ribosomal subunit protein bL28.